A 438-amino-acid polypeptide reads, in one-letter code: Aspartic proteinase nepenthesin-2 (438 aa).

Positions 1–24 (MASPLYSVVLGLAIVSAIVAPTSS) are cleaved as a signal peptide. The propeptide at 25–79 (TSRGTLLHHGQKRPQPGLRVDLEQVDSGKNLTKYELIKRAIKRGERRMRSINAML) is activation peptide. Residue asparagine 54 is glycosylated (N-linked (GlcNAc...) asparagine). The region spanning 96 to 431 (YLMNVAIGTP…DLQNLAVSFV (336 aa)) is the Peptidase A1 domain. Residue aspartate 114 is part of the active site. 6 cysteine pairs are disulfide-bonded: cysteine 124–cysteine 127, cysteine 130–cysteine 204, cysteine 151–cysteine 169, cysteine 156–cysteine 164, cysteine 241–cysteine 435, and cysteine 354–cysteine 395. Residue aspartate 315 is part of the active site.

It belongs to the peptidase A1 family.

It is found in the secreted. It catalyses the reaction Similar to pepsin, but also cleaves on either side of Asp and at Lys-|-Arg.. Its activity is regulated as follows. Inhibited by pepstatin and by diazoacetyl-D,L-norleucine methyl ester (DAN) in the presence of Cu(2+) ions. In terms of biological role, extracellular proteinase found in the pitcher fluid of carnivorous plants. Digest prey for nitrogen uptake. This is Aspartic proteinase nepenthesin-2 (nep2) from Nepenthes gracilis (Slender pitcher plant).